The primary structure comprises 377 residues: 4-hydroxy-3-methylbut-2-en-1-yl diphosphate synthase (flavodoxin) (377 aa).

4 residues coordinate [4Fe-4S] cluster: Cys-272, Cys-275, Cys-307, and Glu-314.

This sequence belongs to the IspG family. [4Fe-4S] cluster is required as a cofactor.

It catalyses the reaction (2E)-4-hydroxy-3-methylbut-2-enyl diphosphate + oxidized [flavodoxin] + H2O + 2 H(+) = 2-C-methyl-D-erythritol 2,4-cyclic diphosphate + reduced [flavodoxin]. It functions in the pathway isoprenoid biosynthesis; isopentenyl diphosphate biosynthesis via DXP pathway; isopentenyl diphosphate from 1-deoxy-D-xylulose 5-phosphate: step 5/6. In terms of biological role, converts 2C-methyl-D-erythritol 2,4-cyclodiphosphate (ME-2,4cPP) into 1-hydroxy-2-methyl-2-(E)-butenyl 4-diphosphate. The protein is 4-hydroxy-3-methylbut-2-en-1-yl diphosphate synthase (flavodoxin) of Zymomonas mobilis subsp. mobilis (strain ATCC 31821 / ZM4 / CP4).